We begin with the raw amino-acid sequence, 176 residues long: ATP-dependent protease subunit HslV (176 aa).

The active site involves T5. 3 residues coordinate Na(+): S161, C164, and T167.

The protein belongs to the peptidase T1B family. HslV subfamily. In terms of assembly, a double ring-shaped homohexamer of HslV is capped on each side by a ring-shaped HslU homohexamer. The assembly of the HslU/HslV complex is dependent on binding of ATP.

It is found in the cytoplasm. It catalyses the reaction ATP-dependent cleavage of peptide bonds with broad specificity.. With respect to regulation, allosterically activated by HslU binding. Functionally, protease subunit of a proteasome-like degradation complex believed to be a general protein degrading machinery. This chain is ATP-dependent protease subunit HslV, found in Thermoanaerobacter sp. (strain X514).